A 307-amino-acid polypeptide reads, in one-letter code: Malate dehydrogenase (307 aa).

NAD(+) contacts are provided by residues Gly-8–Gly-13 and Asp-32. The substrate site is built by Arg-81 and Arg-87. Residues Asn-94 and Val-117–Asn-119 contribute to the NAD(+) site. Residues Asn-119 and Arg-150 each contribute to the substrate site. The active-site Proton acceptor is the His-174.

This sequence belongs to the LDH/MDH superfamily. MDH type 3 family.

It catalyses the reaction (S)-malate + NAD(+) = oxaloacetate + NADH + H(+). Catalyzes the reversible oxidation of malate to oxaloacetate. The chain is Malate dehydrogenase from Dehalococcoides mccartyi (strain ATCC BAA-2100 / JCM 16839 / KCTC 5957 / BAV1).